Reading from the N-terminus, the 209-residue chain is Large ribosomal subunit protein uL4 (209 aa).

The disordered stretch occupies residues 50-89; the sequence is MTKTKGLVSGGGKKPFKQKGTGGARQGSSRSILMPGGGTA.

It belongs to the universal ribosomal protein uL4 family. In terms of assembly, part of the 50S ribosomal subunit.

In terms of biological role, one of the primary rRNA binding proteins, this protein initially binds near the 5'-end of the 23S rRNA. It is important during the early stages of 50S assembly. It makes multiple contacts with different domains of the 23S rRNA in the assembled 50S subunit and ribosome. Forms part of the polypeptide exit tunnel. This is Large ribosomal subunit protein uL4 from Bdellovibrio bacteriovorus (strain ATCC 15356 / DSM 50701 / NCIMB 9529 / HD100).